Consider the following 108-residue polypeptide: Thioredoxin (108 aa).

The 107-residue stretch at 2 to 108 (NKIIELTDQN…LKEFLDENIN (107 aa)) folds into the Thioredoxin domain. The cysteines at positions 32 and 35 are disulfide-linked.

The protein belongs to the thioredoxin family.

Its function is as follows. Participates in various redox reactions through the reversible oxidation of its active center dithiol to a disulfide and catalyzes dithiol-disulfide exchange reactions. In Buchnera aphidicola subsp. Acyrthosiphon pisum (strain APS) (Acyrthosiphon pisum symbiotic bacterium), this protein is Thioredoxin (trxA).